A 199-amino-acid chain; its full sequence is Calcium-binding protein CAST (199 aa).

A compositionally biased stretch (basic and acidic residues) spans methionine 1–lysine 13. Residues methionine 1–leucine 31 form a disordered region. EF-hand domains follow at residues leucine 36–aspartate 71, serine 75–glycine 110, glutamine 125–proline 160, and serine 163–proline 198. The Ca(2+) site is built by aspartate 49, asparagine 51, aspartate 53, and glutamate 60. Ca(2+) contacts are provided by aspartate 138, asparagine 140, aspartate 142, glutamate 149, aspartate 178, aspartate 180, arginine 182, and glutamate 187.

In terms of biological role, not known. Probably binds 3 calcium ions. The polypeptide is Calcium-binding protein CAST (Solanum tuberosum (Potato)).